The chain runs to 165 residues: Nucleotide-binding protein A9601_05361 (165 aa).

Belongs to the YajQ family.

Nucleotide-binding protein. The protein is Nucleotide-binding protein A9601_05361 of Prochlorococcus marinus (strain AS9601).